The sequence spans 78 residues: Large ribosomal subunit protein bL28 (78 aa).

This sequence belongs to the bacterial ribosomal protein bL28 family.

This chain is Large ribosomal subunit protein bL28, found in Prochlorococcus marinus (strain AS9601).